A 259-amino-acid chain; its full sequence is Phosphate import ATP-binding protein PstB (259 aa).

In terms of domain architecture, ABC transporter spans 11-254 (AESKNLNFYY…PDNPRTEDYI (244 aa)). Residue 43 to 50 (GPSGCGKS) participates in ATP binding.

This sequence belongs to the ABC transporter superfamily. Phosphate importer (TC 3.A.1.7) family. In terms of assembly, the complex is composed of two ATP-binding proteins (PstB), two transmembrane proteins (PstC and PstA) and a solute-binding protein (PstS).

The protein localises to the cell inner membrane. It catalyses the reaction phosphate(out) + ATP + H2O = ADP + 2 phosphate(in) + H(+). Functionally, part of the ABC transporter complex PstSACB involved in phosphate import. Responsible for energy coupling to the transport system. This chain is Phosphate import ATP-binding protein PstB, found in Geobacter sulfurreducens (strain ATCC 51573 / DSM 12127 / PCA).